Reading from the N-terminus, the 915-residue chain is Probable dipeptidyl-aminopeptidase B (915 aa).

Disordered regions lie at residues M1–S20 and Q52–E74. Over M1–K95 the chain is Cytoplasmic. Residues R55–E72 show a composition bias toward basic and acidic residues. Residues I96–F116 form a helical; Signal-anchor for type II membrane protein membrane-spanning segment. Residues L117–V915 are Vacuolar-facing. N-linked (GlcNAc...) asparagine glycosylation is found at N133, N179, N349, and N572. The active-site Charge relay system is the S754. Residue N813 is glycosylated (N-linked (GlcNAc...) asparagine). Residues D831 and H864 each act as charge relay system in the active site. An N-linked (GlcNAc...) asparagine glycan is attached at N900.

The protein belongs to the peptidase S9B family.

It localises to the vacuole membrane. It carries out the reaction Release of an N-terminal dipeptide, Xaa-Yaa-|-Zaa-, from a polypeptide, preferentially when Yaa is Pro, provided Zaa is neither Pro nor hydroxyproline.. Functionally, type IV dipeptidyl-peptidase which removes N-terminal dipeptides sequentially from polypeptides having unsubstituted N-termini provided that the penultimate residue is proline. In Blastomyces gilchristii (strain SLH14081) (Blastomyces dermatitidis), this protein is Probable dipeptidyl-aminopeptidase B (DAPB).